A 480-amino-acid polypeptide reads, in one-letter code: 6-phosphogluconate dehydrogenase, decarboxylating 1 (480 aa).

Residues 10 to 15, 33 to 35, 77 to 79, and N105 each bind NADP(+); these read GLAVMG, NRT, and VKA. Substrate is bound by residues N105 and 131 to 133; that span reads SGG. The Proton acceptor role is filled by K186. Residue 189-190 participates in substrate binding; that stretch reads HN. Residue E193 is the Proton donor of the active site. Residues Y194, K264, R291, R450, and H456 each contribute to the substrate site.

Belongs to the 6-phosphogluconate dehydrogenase family. In terms of assembly, homodimer. In terms of tissue distribution, highly expressed in inflorescence, lowly expressed in root and embryos and almost absent in leaves.

It is found in the cytoplasm. It catalyses the reaction 6-phospho-D-gluconate + NADP(+) = D-ribulose 5-phosphate + CO2 + NADPH. Its pathway is carbohydrate degradation; pentose phosphate pathway; D-ribulose 5-phosphate from D-glucose 6-phosphate (oxidative stage): step 3/3. Catalyzes the oxidative decarboxylation of 6-phosphogluconate to ribulose 5-phosphate and CO(2), with concomitant reduction of NADP to NADPH. The chain is 6-phosphogluconate dehydrogenase, decarboxylating 1 (G6PGH1) from Oryza sativa subsp. japonica (Rice).